A 317-amino-acid polypeptide reads, in one-letter code: Transaldolase (317 aa).

The active-site Schiff-base intermediate with substrate is the Lys132.

It belongs to the transaldolase family. Type 1 subfamily.

It is found in the cytoplasm. It catalyses the reaction D-sedoheptulose 7-phosphate + D-glyceraldehyde 3-phosphate = D-erythrose 4-phosphate + beta-D-fructose 6-phosphate. Its pathway is carbohydrate degradation; pentose phosphate pathway; D-glyceraldehyde 3-phosphate and beta-D-fructose 6-phosphate from D-ribose 5-phosphate and D-xylulose 5-phosphate (non-oxidative stage): step 2/3. Functionally, transaldolase is important for the balance of metabolites in the pentose-phosphate pathway. The sequence is that of Transaldolase from Haemophilus influenzae (strain ATCC 51907 / DSM 11121 / KW20 / Rd).